We begin with the raw amino-acid sequence, 356 residues long: Protein pelota homolog (356 aa).

It belongs to the eukaryotic release factor 1 family. Pelota subfamily. In terms of assembly, monomer. The cofactor is a divalent metal cation.

It is found in the cytoplasm. Functionally, may function in recognizing stalled ribosomes, interact with stem-loop structures in stalled mRNA molecules, and effect endonucleolytic cleavage of the mRNA. May play a role in the release non-functional ribosomes and degradation of damaged mRNAs. Has endoribonuclease activity. In Staphylothermus marinus (strain ATCC 43588 / DSM 3639 / JCM 9404 / F1), this protein is Protein pelota homolog.